The primary structure comprises 256 residues: Fructose-1,6-bisphosphatase/inositol-1-monophosphatase (256 aa).

Positions 67, 83, 85, and 86 each coordinate Mg(2+). Substrate contacts are provided by residues 86–88 (DGS), Arg-170, Ile-175, and Arg-194. Asp-201 is a Mg(2+) binding site.

The protein belongs to the inositol monophosphatase superfamily. FBPase class 4 family. As to quaternary structure, homodimer. The cofactor is Mg(2+).

The enzyme catalyses beta-D-fructose 1,6-bisphosphate + H2O = beta-D-fructose 6-phosphate + phosphate. The catalysed reaction is a myo-inositol phosphate + H2O = myo-inositol + phosphate. Its function is as follows. Phosphatase with broad specificity; it can dephosphorylate fructose 1,6-bisphosphate (FBP) and inositol-1-phosphate (IMP). However, while possessing a high FBPase activity in vitro, does not participate in gluconeogenesis in vivo. This is Fructose-1,6-bisphosphatase/inositol-1-monophosphatase (suhB) from Thermococcus kodakarensis (strain ATCC BAA-918 / JCM 12380 / KOD1) (Pyrococcus kodakaraensis (strain KOD1)).